The following is a 187-amino-acid chain: Decorin-binding protein B (187 aa).

The N-terminal stretch at 1-20 (MKIGKLNSIVIALFFKLLVA) is a signal peptide.

The protein belongs to the decorin-binding protein family.

In terms of biological role, binds to decorin which may mediate the adherence of B.burgdorferi to collagen fibers in skin and other tissues. In Borreliella burgdorferi (strain ATCC 35210 / DSM 4680 / CIP 102532 / B31) (Borrelia burgdorferi), this protein is Decorin-binding protein B (dbpB).